The sequence spans 102 residues: Iron-sulfur cluster assembly protein CyaY (102 aa).

The protein belongs to the frataxin family.

In terms of biological role, involved in iron-sulfur (Fe-S) cluster assembly. May act as a regulator of Fe-S biogenesis. This is Iron-sulfur cluster assembly protein CyaY from Pasteurella multocida (strain Pm70).